Reading from the N-terminus, the 168-residue chain is Zinc finger A20 and AN1 domain-containing stress-associated protein 1 (168 aa).

The A20-type zinc finger occupies 13-47 (PSEPKLCVKGCGFFGSPSNMNLCSKCYRDIRATEE). Zn(2+)-binding residues include C19, C23, C35, and C38. The interval 49–105 (TASAKAAVEKSLNPNKPKTQPQQSQEITQGVLGSGSSSSSTRGGDSAAAPLDPPKST) is disordered. Positions 60–76 (LNPNKPKTQPQQSQEIT) are enriched in polar residues. The span at 82–94 (SGSSSSSTRGGDS) shows a compositional bias: low complexity. Residues 103 to 149 (KSTATRCLSCNKKVGVTGFKCRCGSTFCGTHRYPESHECQFDFKGVA) form an AN1-type zinc finger. Residues C109, C112, C123, C125, C130, H133, H139, and C141 each contribute to the Zn(2+) site.

Functionally, may be involved in environmental stress response. In Arabidopsis thaliana (Mouse-ear cress), this protein is Zinc finger A20 and AN1 domain-containing stress-associated protein 1 (SAP1).